Consider the following 663-residue polypeptide: RING finger protein 145 (663 aa).

A run of 14 helical transmembrane segments spans residues Tyr-53 to Pro-73, Leu-77 to Ser-97, Phe-123 to Thr-143, Ile-146 to Glu-166, Ile-168 to Gly-188, Leu-205 to Trp-222, Leu-225 to Ser-245, Tyr-275 to Cys-295, Thr-316 to Val-336, Phe-340 to Ile-360, Ser-384 to Phe-404, Leu-410 to Ile-430, Leu-460 to Gly-480, and Trp-482 to Ala-502. Residues Tyr-81–Phe-84 carry the YLYF motif motif. Cys-537 is an active-site residue. Residues Cys-537–His-575 form an RING-type; atypical zinc finger. Residues Glu-607 to Ala-663 are disordered. The segment covering Glu-624–Ala-663 has biased composition (basic and acidic residues).

As to quaternary structure, interacts (via YLYF motif) with INSIG1 and INSIG2.

It localises to the endoplasmic reticulum membrane. It carries out the reaction S-ubiquitinyl-[E2 ubiquitin-conjugating enzyme]-L-cysteine + [acceptor protein]-L-lysine = [E2 ubiquitin-conjugating enzyme]-L-cysteine + N(6)-ubiquitinyl-[acceptor protein]-L-lysine.. Its function is as follows. E3 ubiquitin ligase that catalyzes the direct transfer of ubiquitin from E2 ubiquitin-conjugating enzyme to a specific substrate. In response to bacterial infection, negatively regulates the phagocyte oxidative burst by controlling the turnover of the NADPH oxidase complex subunits. Promotes monoubiquitination of CYBA and 'Lys-48'-linked polyubiquitination and degradation of CYBB NADPH oxidase catalytic subunits, both essential for the generation of antimicrobial reactive oxygen species. Involved in the maintenance of cholesterol homeostasis. In response to high sterol concentrations ubiquitinates HMGCR, a rate-limiting enzyme in cholesterol biosynthesis, and targets it for degradation. The interaction with INSIG1 is required for this function. In addition, triggers ubiquitination of SCAP, likely inhibiting its transport to the Golgi apparatus and the subsequent processing/maturation of SREBPF2, ultimately down-regulating cholesterol biosynthesis. This is RING finger protein 145 from Homo sapiens (Human).